We begin with the raw amino-acid sequence, 257 residues long: ATP synthase subunit a (257 aa).

Positions 1–4 (MFIT) are cleaved as a propeptide — removed in mature form. Helical transmembrane passes span 27–47 (FSNF…LAII), 58–78 (IVPQ…LNLV), 93–113 (YFPF…LRLI), 122–142 (QLIF…ILGL), 149–169 (VFGL…LVLI), 189–209 (IIAG…FMGL), 214–234 (FIIG…EFGI), and 236–256 (FIQA…SLNL).

The protein belongs to the ATPase A chain family. F-type ATPases have 2 components, CF(1) - the catalytic core - and CF(0) - the membrane proton channel. CF(1) has five subunits: alpha(3), beta(3), gamma(1), delta(1), epsilon(1). CF(0) has three main subunits: a, b and c.

It localises to the mitochondrion inner membrane. In terms of biological role, mitochondrial membrane ATP synthase (F(1)F(0) ATP synthase or Complex V) produces ATP from ADP in the presence of a proton gradient across the membrane which is generated by electron transport complexes of the respiratory chain. F-type ATPases consist of two structural domains, F(1) - containing the extramembraneous catalytic core and F(0) - containing the membrane proton channel, linked together by a central stalk and a peripheral stalk. During catalysis, ATP synthesis in the catalytic domain of F(1) is coupled via a rotary mechanism of the central stalk subunits to proton translocation. Key component of the proton channel; it may play a direct role in the translocation of protons across the membrane. The sequence is that of ATP synthase subunit a (atp6) from Schizosaccharomyces pombe (strain 972 / ATCC 24843) (Fission yeast).